Here is a 111-residue protein sequence, read N- to C-terminus: WAP four-disulfide core domain protein 12 (111 aa).

A signal peptide spans 1–23 (MGSSSFLVLMVSLVLVTLVAVEG). The WAP domain occupies 27 to 74 (GIEKAGVCPADNVRCFKSDPPQCHTDQDCLGERKCCYLHCGFKCVIPV). Disulfide bonds link cysteine 34–cysteine 62, cysteine 41–cysteine 66, cysteine 49–cysteine 61, and cysteine 55–cysteine 70. A disordered region spans residues 80 to 111 (GGNKDEDVSRPYPEPGWEAKCPGSSSTRCPQK). Positions 102–111 (GSSSTRCPQK) are enriched in polar residues.

As to expression, highly expressed in prostate, skin, lung and esophagus. Weakly expressed in skeletal muscle, epididymis, kidney, trachea, salivary gland, testis and seminal vesicle.

The protein localises to the secreted. Its function is as follows. Antibacterial protein. Putative acid-stable proteinase inhibitor. This is WAP four-disulfide core domain protein 12 (WFDC12) from Homo sapiens (Human).